Consider the following 217-residue polypeptide: Adenylate kinase (217 aa).

10-15 (GAGKGT) is a binding site for ATP. The interval 30–59 (STGDMFRAAMKEETQLGLEAKSFIDKGELV) is NMP. AMP contacts are provided by residues threonine 31, arginine 36, 57-59 (ELV), 85-88 (GFPR), and glutamine 92. Residues 126 to 163 (GRRICKNCGATYHLVFNPPAKENVCDKCGGELYQRADD) form an LID region. Residue arginine 127 coordinates ATP. Residues cysteine 130 and cysteine 133 each contribute to the Zn(2+) site. ATP is bound at residue 136-137 (TY). Zn(2+) contacts are provided by cysteine 150 and cysteine 153. AMP contacts are provided by arginine 160 and arginine 171. Lysine 199 is an ATP binding site.

Belongs to the adenylate kinase family. As to quaternary structure, monomer.

The protein localises to the cytoplasm. The enzyme catalyses AMP + ATP = 2 ADP. Its pathway is purine metabolism; AMP biosynthesis via salvage pathway; AMP from ADP: step 1/1. In terms of biological role, catalyzes the reversible transfer of the terminal phosphate group between ATP and AMP. Plays an important role in cellular energy homeostasis and in adenine nucleotide metabolism. In Bacillus pumilus (strain SAFR-032), this protein is Adenylate kinase.